The chain runs to 893 residues: Dystroglycan 1 (893 aa).

Residues 1–27 (MSVDNWLLHPLWGQTFLLLLSVAVAQA) form the signal peptide. Positions 28-406 (HWPSEPSEAV…GQIRPTLTIP (379 aa)) are required for laminin recognition. The tract at residues 47–69 (SMHSVLSDFQEAVPTVVGIPDGT) is O-glycosylated at one site. N-linked (GlcNAc...) asparagine glycosylation is present at N139. A disulfide bridge connects residues C180 and C262. Residues 314-483 (ATPTPVTAIG…PPTRIRTTTS (170 aa)) form a mucin-like domain region. 3 O-linked (Man6P...) threonine glycosylation sites follow: T315, T317, and T377. The interval 379 to 498 (TLGPIQPTRV…GEPNQRPELK (120 aa)) is disordered. Positions 409 to 445 (VEPTAVITPPTTTTKKPRVSTPKPATPSTDSSTTTTR) are enriched in low complexity. Positions 461–483 (TTKAPITRLETASPPTRIRTTTS) are O-glycosylated at seven sites with GalNAc. The 110-residue stretch at 601–710 (KAPARFKARL…LSIAVTGSGS (110 aa)) folds into the Peptidase S72 domain. 3 N-linked (GlcNAc...) asparagine glycosylation sites follow: N639, N647, and N659. At 652–751 (SIVVEWTNNT…SSEDDVYLHT (100 aa)) the chain is on the extracellular side. C667 and C711 are joined by a disulfide. The interval 722-744 (PSPGSSAAPATEVPDRDPEKSSE) is disordered. Basic and acidic residues predominate over residues 734–744 (VPDRDPEKSSE). A helical transmembrane segment spans residues 752-772 (VIPAVVVAAILLIAGIIAMIC). At 773–893 (YRKKRKGKLT…YRSPPPYVPP (121 aa)) the chain is on the cytoplasmic side. The Nuclear localization signal signature appears at 774–780 (RKKRKGK). T788 carries the phosphothreonine modification. Residues 817-893 (LQEEKAPLPP…YRSPPPYVPP (77 aa)) are required for interaction with CAV3. A disordered region spans residues 821-893 (KAPLPPPEYP…YRSPPPYVPP (73 aa)). A compositionally biased stretch (polar residues) spans 830–844 (PNQSMPETTPLNQDT). The span at 857 to 868 (NAPPYQPPPPFT) shows a compositional bias: pro residues. Residues 878-893 (PKNMTPYRSPPPYVPP) are required for binding DMD and UTRN. The PPXY motif motif lies at 887 to 890 (PPPY). Residue Y890 is modified to Phosphotyrosine; by SRC.

In terms of assembly, monomer. Heterodimer of alpha- and beta-dystroglycan subunits which are the central components of the dystrophin-glycoprotein complex. This complex then can form a dystrophin-associated glycoprotein complex (DGC) which is composed of three subcomplexes: a cytoplasmic complex comprised of DMD (or UTRN), DTNA and a number of syntrophins, such as SNTB1, SNTB2, SNTG1 and SNTG2, the transmembrane dystroglycan complex, and the sarcoglycan-sarcospan complex. Interacts (via the N-terminal of alphaDAG1) with LARGE1; the interaction enhances laminin binding. Interacts with SGCD. Interacts with AGR2 and AGR3. Interacts (betaDAG1) with DMD; the interaction is inhibited by phosphorylation on the PPXY motif. Interacts (betaDAG1, via its PPXY motif) with UTRN (via its WWW and ZZ domains); the interaction is inhibited by phosphorylation on the PPXY motif. Interacts (betaDAG1, via its phosphorylated PPXY motif) with the SH2 domain-containing proteins, FYN, CSK, NCK and SHC. Interacts (betaDAG1) with CAV3 (via a central WW-like domain); the interaction disrupts the binding of DMD. BetaDAG1 directly interacts with ANK3, but not with ANK2; this interaction does not interfere with DMD-binding and is required for retention at costameres. Identified in a dystroglycan complex that contains at least PRX, DRP2, UTRN, DMD and DAG1. Interacts with POMGNT1. BetaDAG1 interacts with CD93. Post-translationally, O-glycosylated. POMGNT1 catalyzes the initial addition of N-acetylglucosamine, giving rise to the GlcNAc(beta1-2)Man(alpha1-)O-Ser/Thr moiety and thus providing the necessary basis for the addition of further carbohydrate moieties. Heavily O-glycosylated comprising of up to two thirds of its mass and the carbohydrate composition differs depending on tissue type. Mucin-type O-glycosylation is important for ligand binding activity. O-mannosylation is found in high abundance in both brain and muscle where the most abundant glycan is Sia-alpha-2-3-Gal-beta-1-4-Glc-NAc-beta-1-2-Man. In muscle, glycosylation on Thr-315, Thr-317, Thr-379 by a phosphorylated O-mannosyl glycan with the structure 2-(N-acetylamido)-2-deoxygalactosyl-beta-1,3-2-(N-acetylamido)-2-deoxyglucosyl-beta-1,4-6-phosphomannose is mediated by like-acetylglucosaminyltransferase (LARGE1) protein amd is required for laminin binding. O-glycosylated in the N-terminal region with a core 1 or possibly core 8 glycan. The brain form displays a unique glycosylation pattern which is absent in other tissues; this form shows enhanced binding to laminin LAMA5 compared to the skeletal muscle form. N-glycosylated. In terms of processing, autolytic cleavage produces the alpha and beta subunits. In cutaneous cells, as well as in certain pathological conditions, shedding of beta-dystroglycan can occur releasing a peptide of about 30 kDa. Post-translationally, SRC-mediated phosphorylation of the PPXY motif of the beta subunit recruits SH2 domain-containing proteins, but inhibits binding to WWW domain-containing proteins, DMD and UTRN. This phosphorylation also inhibits nuclear entry. Detected in brain and kidney (at protein level). Detected in sciatic nerve (at protein level). Expressed in neurons and muscle cells (at protein level). Expressed in a variety of tissues. In brain, expressed in the hippocampal formation, the olfactory bulb, the cerebellum and the thalamus. In the peripheral nerve system, expressed in Schwann cells.

Its subcellular location is the secreted. The protein resides in the extracellular space. The protein localises to the cell membrane. It localises to the cytoplasm. It is found in the cytoskeleton. Its subcellular location is the nucleus. The protein resides in the nucleoplasm. The protein localises to the sarcolemma. It localises to the postsynaptic cell membrane. Its function is as follows. The dystroglycan complex is involved in a number of processes including laminin and basement membrane assembly, sarcolemmal stability, cell survival, peripheral nerve myelination, nodal structure, cell migration, and epithelial polarization. Extracellular peripheral glycoprotein that acts as a receptor for extracellular matrix proteins containing laminin-G domains, and for certain adenoviruses. Receptor for laminin-2 (LAMA2) and agrin in peripheral nerve Schwann cells. Also acts as a receptor for laminin LAMA5. In terms of biological role, transmembrane protein that plays important roles in connecting the extracellular matrix to the cytoskeleton. Acts as a cell adhesion receptor in both muscle and non-muscle tissues. Receptor for both DMD and UTRN and, through these interactions, scaffolds axin to the cytoskeleton. Also functions in cell adhesion-mediated signaling and implicated in cell polarity. The polypeptide is Dystroglycan 1 (Mus musculus (Mouse)).